The primary structure comprises 288 residues: ATP synthase gamma chain (288 aa).

Belongs to the ATPase gamma chain family. F-type ATPases have 2 components, CF(1) - the catalytic core - and CF(0) - the membrane proton channel. CF(1) has five subunits: alpha(3), beta(3), gamma(1), delta(1), epsilon(1). CF(0) has three main subunits: a, b and c.

It localises to the cell inner membrane. Its function is as follows. Produces ATP from ADP in the presence of a proton gradient across the membrane. The gamma chain is believed to be important in regulating ATPase activity and the flow of protons through the CF(0) complex. This chain is ATP synthase gamma chain, found in Laribacter hongkongensis (strain HLHK9).